Reading from the N-terminus, the 643-residue chain is SURP and G-patch domain-containing protein 1 (643 aa).

Disordered stretches follow at residues 48-69 (ARME…HPGE) and 97-119 (KAQT…SSLK). At T128 the chain carries Phosphothreonine. Residues 187–229 (VIEKLARFVAEGGPELEKVAMEDYKDNPAFTFLHDKNSREFLY) form an SURP motif 1 repeat. At S252 the chain carries Phosphoserine. The stretch at 262–305 (LAEKLARFIADGGPEVETIALQNNRENQAFSFLYDPNSQGYRYY) is one SURP motif 2 repeat. Disordered regions lie at residues 316–335 (KAGS…LRRK) and 360–393 (AVNP…DKVE). S322 is modified (phosphoserine). The Nuclear localization signal signature appears at 378–384 (KRKRKSR). Phosphoserine occurs at positions 407, 409, 412, and 483. The G-patch domain maps to 560-607 (VENIGYQMLMKMGWKEGEGLGTEGQGIKNPVNKGATTIDGAGFGIDRP).

As to quaternary structure, component of the spliceosome.

The protein localises to the nucleus. Its function is as follows. Plays a role in pre-mRNA splicing. This is SURP and G-patch domain-containing protein 1 (Sugp1) from Mus musculus (Mouse).